Reading from the N-terminus, the 257-residue chain is V-type proton ATPase subunit D (257 aa).

Residues 211-233 form a disordered region; the sequence is KKKDLKAKEAQKEENSANKTIME. Basic and acidic residues predominate over residues 216–226; sequence KAKEAQKEENS.

This sequence belongs to the V-ATPase D subunit family. V-ATPase is a heteromultimeric enzyme composed of a peripheral catalytic V1 complex (components A to H) attached to an integral membrane V0 proton pore complex (components: a, c, c', c'' and d).

Subunit of the peripheral V1 complex of vacuolar ATPase. Vacuolar ATPase is responsible for acidifying a variety of intracellular compartments in eukaryotic cells, thus providing most of the energy required for transport processes in the vacuolar system. The sequence is that of V-type proton ATPase subunit D (atp6v1d) from Dictyostelium discoideum (Social amoeba).